We begin with the raw amino-acid sequence, 112 residues long: Protein lin-52 homolog (112 aa).

The protein belongs to the lin-52 family. In terms of assembly, component of the DREAM complex. In terms of tissue distribution, expressed in the brain, liver and retina. Highly expressed in the retinal ganglion cell and inner nuclear layers at the parr stage. Expressed at a lower level in inner segments of some retinal photoreceptors.

In terms of biological role, may be involved in retinal development. The protein is Protein lin-52 homolog (lin52) of Oncorhynchus mykiss (Rainbow trout).